The following is a 158-amino-acid chain: D-aminoacyl-tRNA deacylase (158 aa).

A Gly-cisPro motif, important for rejection of L-amino acids motif is present at residues 138–139; it reads GP.

Belongs to the DTD family. As to quaternary structure, homodimer.

The protein resides in the cytoplasm. It catalyses the reaction glycyl-tRNA(Ala) + H2O = tRNA(Ala) + glycine + H(+). It carries out the reaction a D-aminoacyl-tRNA + H2O = a tRNA + a D-alpha-amino acid + H(+). Functionally, an aminoacyl-tRNA editing enzyme that deacylates mischarged D-aminoacyl-tRNAs. Hydrolyzes correctly charged, achiral, glycyl-tRNA(Gly). Deacylates mischarged endogenous and E.coli glycyl-tRNA(Ala), protecting cells against glycine mischarging by AlaRS. Acts via tRNA-based rather than protein-based catalysis; rejects L-amino acids rather than detecting D-amino acids in the active site. By recycling D-aminoacyl-tRNA to D-amino acids and free tRNA molecules, this enzyme counteracts the toxicity associated with the formation of D-aminoacyl-tRNA entities in vivo and helps enforce protein L-homochirality. The sequence is that of D-aminoacyl-tRNA deacylase from Drosophila melanogaster (Fruit fly).